The following is a 179-amino-acid chain: Bifunctional protein PyrR (179 aa).

Positions 100 to 112 (VILIDDVLFTGRT) match the PRPP-binding motif.

Belongs to the purine/pyrimidine phosphoribosyltransferase family. PyrR subfamily.

It catalyses the reaction UMP + diphosphate = 5-phospho-alpha-D-ribose 1-diphosphate + uracil. Functionally, regulates the transcription of the pyrimidine nucleotide (pyr) operon in response to exogenous pyrimidines. Its function is as follows. Also displays a weak uracil phosphoribosyltransferase activity which is not physiologically significant. The polypeptide is Bifunctional protein PyrR (Mannheimia succiniciproducens (strain KCTC 0769BP / MBEL55E)).